The chain runs to 254 residues: MLPWQRQVPTSIFPQSNEQVFRMMLAQQHLQLQNFLQQRKMALLAMNPEIPMITDLKKAKFDFTHMADSIESEQKIKEESVSPKMSPTLTTAAVRPFVPYDQPWFMIPGRGRTTGRAARPKKEFICKYCDRHFTKSYNLLIHERTHTDERPYSCDVCGKAFRRQDHLRDHKYIHQKDRPFKCEICGKGFCQSRTLLVHRATHDPNRHSIGAPVVPIKSETPLPELDPRVTLILQNLTDSFNSTSMTSPQISPDR.

3 C2H2-type zinc fingers span residues 124–146 (FICKYCDRHFTKSYNLLIHERTH), 152–174 (YSCDVCGKAFRRQDHLRDHKYIH), and 180–202 (FKCEICGKGFCQSRTLLVHRATH).

The protein belongs to the Odd C2H2-type zinc-finger protein family.

Its subcellular location is the nucleus. Its function is as follows. May function as transcription regulator. Required for morphogenesis and function of the digestive tract. In Caenorhabditis elegans, this protein is Protein odd-skipped-related 2.